A 296-amino-acid polypeptide reads, in one-letter code: Beta-lactamase (296 aa).

The first 21 residues, 1–21, serve as a signal peptide directing secretion; the sequence is MKAYFIAILTLFTCIATVVRA. Serine 66 functions as the Acyl-ester intermediate in the catalytic mechanism. 235-237 provides a ligand contact to substrate; that stretch reads KTG.

This sequence belongs to the class-A beta-lactamase family.

It carries out the reaction a beta-lactam + H2O = a substituted beta-amino acid. The chain is Beta-lactamase (cblA) from Bacteroides uniformis.